Reading from the N-terminus, the 361-residue chain is Putative F-box protein At3g19560 (361 aa).

Residues 3 to 49 (MTMMSDISQDLLEEILSRVPITSLRAVKSTCKRWKDLLNDPSFSKKY) form the F-box domain.

The protein is Putative F-box protein At3g19560 of Arabidopsis thaliana (Mouse-ear cress).